A 319-amino-acid chain; its full sequence is tRNA U34 carboxymethyltransferase (319 aa).

Carboxy-S-adenosyl-L-methionine is bound by residues lysine 88, tryptophan 102, lysine 107, glycine 126, leucine 176 to glutamate 177, methionine 192, tyrosine 196, and arginine 311.

It belongs to the class I-like SAM-binding methyltransferase superfamily. CmoB family. Homotetramer.

The enzyme catalyses carboxy-S-adenosyl-L-methionine + 5-hydroxyuridine(34) in tRNA = 5-carboxymethoxyuridine(34) in tRNA + S-adenosyl-L-homocysteine + H(+). Functionally, catalyzes carboxymethyl transfer from carboxy-S-adenosyl-L-methionine (Cx-SAM) to 5-hydroxyuridine (ho5U) to form 5-carboxymethoxyuridine (cmo5U) at position 34 in tRNAs. This Azotobacter vinelandii (strain DJ / ATCC BAA-1303) protein is tRNA U34 carboxymethyltransferase.